A 257-amino-acid chain; its full sequence is GTP cyclohydrolase FolE2 (257 aa).

This sequence belongs to the GTP cyclohydrolase IV family.

It catalyses the reaction GTP + H2O = 7,8-dihydroneopterin 3'-triphosphate + formate + H(+). Its pathway is cofactor biosynthesis; 7,8-dihydroneopterin triphosphate biosynthesis; 7,8-dihydroneopterin triphosphate from GTP: step 1/1. In terms of biological role, converts GTP to 7,8-dihydroneopterin triphosphate. This Syntrophobacter fumaroxidans (strain DSM 10017 / MPOB) protein is GTP cyclohydrolase FolE2.